We begin with the raw amino-acid sequence, 353 residues long: NADH-quinone oxidoreductase subunit H (353 aa).

The next 9 helical transmembrane spans lie at 8–28 (LLVYLVILFGFVIVSVLLFIW), 75–95 (GVFWLAPLVAFVPVMLMFAAI), 108–128 (IGILYILAVSSVTVIGIFMAG), 148–168 (VSYEIPLVLSILGVVMLTGSL), 178–198 (SVPFVLLQPLGFFVYLSAAMA), 229–249 (LFYLMEYAEVLAISAIATTLF), 258–278 (LHPVIWFITKVLIIFMFIIWV), 297–317 (FLLPLSLANLVITAFEILAAP), and 319–339 (MNTAVLIGINIAVMFGLILLF).

The protein belongs to the complex I subunit 1 family. NDH-1 is composed of 14 different subunits. Subunits NuoA, H, J, K, L, M, N constitute the membrane sector of the complex.

It localises to the cell membrane. The enzyme catalyses a quinone + NADH + 5 H(+)(in) = a quinol + NAD(+) + 4 H(+)(out). Its function is as follows. NDH-1 shuttles electrons from NADH, via FMN and iron-sulfur (Fe-S) centers, to quinones in the respiratory chain. The immediate electron acceptor for the enzyme in this species is believed to be ubiquinone. Couples the redox reaction to proton translocation (for every two electrons transferred, four hydrogen ions are translocated across the cytoplasmic membrane), and thus conserves the redox energy in a proton gradient. This subunit may bind ubiquinone. The polypeptide is NADH-quinone oxidoreductase subunit H (Dehalococcoides mccartyi (strain ATCC BAA-2266 / KCTC 15142 / 195) (Dehalococcoides ethenogenes (strain 195))).